A 307-amino-acid polypeptide reads, in one-letter code: UPF0749 protein MT1871 (307 aa).

Positions 1-23 are cleaved as a signal peptide; sequence MAESDRLLGGYDPNAGYSAHAGA. The next 2 helical transmembrane spans lie at 67-87 and 152-172; these read VSWMWQALAATLVAAVFAAAV and VLSLAAASAPVVGPGLTVTVT.

It belongs to the UPF0749 family.

The protein localises to the cell membrane. This Mycobacterium tuberculosis (strain CDC 1551 / Oshkosh) protein is UPF0749 protein MT1871.